A 400-amino-acid chain; its full sequence is Tryptophan synthase beta chain (400 aa).

An N6-(pyridoxal phosphate)lysine modification is found at Lys-91.

Belongs to the TrpB family. As to quaternary structure, tetramer of two alpha and two beta chains. It depends on pyridoxal 5'-phosphate as a cofactor.

The catalysed reaction is (1S,2R)-1-C-(indol-3-yl)glycerol 3-phosphate + L-serine = D-glyceraldehyde 3-phosphate + L-tryptophan + H2O. It functions in the pathway amino-acid biosynthesis; L-tryptophan biosynthesis; L-tryptophan from chorismate: step 5/5. Its function is as follows. The beta subunit is responsible for the synthesis of L-tryptophan from indole and L-serine. The polypeptide is Tryptophan synthase beta chain (Listeria monocytogenes serovar 1/2a (strain ATCC BAA-679 / EGD-e)).